A 302-amino-acid chain; its full sequence is Phosphatidylglycerol--prolipoprotein diacylglyceryl transferase (302 aa).

A run of 3 helical transmembrane segments spans residues 26-46 (WYAL…VMLV), 67-87 (LVLW…VLFY), and 108-128 (IWEG…AIVL). Position 156 (Arg156) interacts with a 1,2-diacyl-sn-glycero-3-phospho-(1'-sn-glycerol). Helical transmembrane passes span 231 to 251 (GALV…LEGV) and 263 to 283 (LGLT…VWLL).

The protein belongs to the Lgt family.

The protein resides in the cell inner membrane. The catalysed reaction is L-cysteinyl-[prolipoprotein] + a 1,2-diacyl-sn-glycero-3-phospho-(1'-sn-glycerol) = an S-1,2-diacyl-sn-glyceryl-L-cysteinyl-[prolipoprotein] + sn-glycerol 1-phosphate + H(+). It functions in the pathway protein modification; lipoprotein biosynthesis (diacylglyceryl transfer). In terms of biological role, catalyzes the transfer of the diacylglyceryl group from phosphatidylglycerol to the sulfhydryl group of the N-terminal cysteine of a prolipoprotein, the first step in the formation of mature lipoproteins. The chain is Phosphatidylglycerol--prolipoprotein diacylglyceryl transferase from Caulobacter sp. (strain K31).